The following is a 296-amino-acid chain: Protease HtpX homolog (296 aa).

2 helical membrane-spanning segments follow: residues 14-34 and 39-59; these read VVLLIVFFCLLAAIGAAVGYL and YQFGLVLALIIGVIYAVSMIF. His-143 contributes to the Zn(2+) binding site. Residue Glu-144 is part of the active site. His-147 is a Zn(2+) binding site. Helical transmembrane passes span 158-178 and 195-215; these read IAVALASAVTLISSIGSRMLF and ILVLIFSILSLILAPLAASLV. Glu-224 contributes to the Zn(2+) binding site.

This sequence belongs to the peptidase M48B family. It depends on Zn(2+) as a cofactor.

The protein localises to the cell membrane. In Streptococcus agalactiae serotype Ia (strain ATCC 27591 / A909 / CDC SS700), this protein is Protease HtpX homolog.